The sequence spans 467 residues: Glutamine synthetase (467 aa).

The region spanning 11-95 (HDVKWIDLRF…IVCDIIEPST (85 aa)) is the GS beta-grasp domain. The 365-residue stretch at 103–467 (PRAIARRAEE…PLEYDLYYSV (365 aa)) folds into the GS catalytic domain. The Mg(2+) site is built by E128 and E130. E206 contacts ATP. E211 and E219 together coordinate Mg(2+). L-glutamate is bound by residues 263-264 (NG) and G264. Mg(2+) is bound at residue H268. Residues 270–272 (HMS) and S272 each bind ATP. The L-glutamate site is built by R320, E326, and R338. ATP-binding residues include R338, R343, and K351. Mg(2+) is bound at residue E356. R358 contributes to the L-glutamate binding site. An O-AMP-tyrosine modification is found at Y396.

Belongs to the glutamine synthetase family. In terms of assembly, oligomer of 12 subunits arranged in the form of two hexameric ring. Mg(2+) serves as cofactor.

Its subcellular location is the cytoplasm. It catalyses the reaction L-glutamate + NH4(+) + ATP = L-glutamine + ADP + phosphate + H(+). The activity of this enzyme could be controlled by adenylation under conditions of abundant glutamine. Catalyzes the ATP-dependent biosynthesis of glutamine from glutamate and ammonia. The sequence is that of Glutamine synthetase from Azotobacter vinelandii.